The chain runs to 441 residues: Tubulin beta chain (441 aa).

GTP is bound by residues Gln11, Glu69, Ser138, Gly142, Thr143, Gly144, Asn204, and Asn226. Mg(2+) is bound at residue Glu69.

This sequence belongs to the tubulin family. Dimer of alpha and beta chains. A typical microtubule is a hollow water-filled tube with an outer diameter of 25 nm and an inner diameter of 15 nM. Alpha-beta heterodimers associate head-to-tail to form protofilaments running lengthwise along the microtubule wall with the beta-tubulin subunit facing the microtubule plus end conferring a structural polarity. Microtubules usually have 13 protofilaments but different protofilament numbers can be found in some organisms and specialized cells. Requires Mg(2+) as cofactor.

The protein resides in the cytoplasm. It localises to the cytoskeleton. Its function is as follows. Tubulin is the major constituent of microtubules, a cylinder consisting of laterally associated linear protofilaments composed of alpha- and beta-tubulin heterodimers. Microtubules grow by the addition of GTP-tubulin dimers to the microtubule end, where a stabilizing cap forms. Below the cap, tubulin dimers are in GDP-bound state, owing to GTPase activity of alpha-tubulin. The protein is Tubulin beta chain of Babesia bovis.